We begin with the raw amino-acid sequence, 298 residues long: Leucine-rich repeat-containing protein 55 (298 aa).

An N-terminal signal peptide occupies residues 1–34 (MGDTWAQLPWPGPPHSALLLVFFLLAAGVMHSDA). The region spanning 35–65 (GASCPVLCTCRNQVVDCSNQRLFSVPPDLPM) is the LRRNT domain. 2 cysteine pairs are disulfide-bonded: Cys-38/Cys-44 and Cys-42/Cys-51. LRR repeat units lie at residues 66 to 87 (DTRN…YLTC), 90 to 111 (ELRV…LFLH), 114 to 135 (RLAH…MFRE), 138 to 160 (GLVH…AFQG), and 163 to 186 (HLRD…EGLP). Residues 196–251 (NPWVCGCTMEPLLKWLRNRIQRCTADSQLAECRGPPEVEGAPLFSLTEESFKACHL) enclose the LRRCT domain. Cystine bridges form between Cys-200-Cys-227 and Cys-202-Cys-249. A helical transmembrane segment spans residues 259 to 279 (LFIAFVGFVVSIASVATNFLL).

Interacts with KCNMA1.

The protein resides in the cell membrane. Functionally, auxiliary protein of the large-conductance, voltage and calcium-activated potassium channel (BK alpha). Modulates gating properties by producing a marked shift in the BK channel's voltage dependence of activation in the hyperpolarizing direction, and in the absence of calcium. This chain is Leucine-rich repeat-containing protein 55 (Lrrc55), found in Rattus norvegicus (Rat).